Reading from the N-terminus, the 429-residue chain is E3 ubiquitin-protein ligase ZNRF4 (429 aa).

The first 27 residues, 1–27, serve as a signal peptide directing secretion; it reads MLRCRPEPLMPRATRVAVAVSLPLSHA. The Lumenal segment spans residues 28–250; sequence VIPTQLPSHP…PPCRDLDCHP (223 aa). The interval 30 to 64 is disordered; the sequence is PTQLPSHPGHRPSGRPRRCPKAPCLPSPVGLSSTQ. A compositionally biased stretch (basic residues) spans 37–49; the sequence is PGHRPSGRPRRCP. A glycan (N-linked (GlcNAc...) asparagine) is linked at Asn152. One can recognise a PA domain in the interval 152–223; it reads NRSLGAIALI…VGEAASQDLR (72 aa). The helical transmembrane segment at 251-271 threads the bilayer; it reads VLTVSWALGRTLALVVSTLFV. Over 272 to 429 the chain is Cytoplasmic; that stretch reads LNRLWLWAQA…SPAPPEAPGQ (158 aa). The RING-type; atypical zinc-finger motif lies at 309 to 352; sequence CAICLDEYEEGDQLKILPCSHTYHCKCIDPWFSQAPRRSCPVCK. Disordered regions lie at residues 358-381 and 409-429; these read TEDS…GHRP and TTSL…APGQ. A compositionally biased stretch (polar residues) spans 409 to 420; that stretch reads TTSLEAEDTTVS.

In terms of assembly, interacts with CANX.

The protein localises to the endoplasmic reticulum membrane. It catalyses the reaction S-ubiquitinyl-[E2 ubiquitin-conjugating enzyme]-L-cysteine + [acceptor protein]-L-lysine = [E2 ubiquitin-conjugating enzyme]-L-cysteine + N(6)-ubiquitinyl-[acceptor protein]-L-lysine.. The protein operates within protein modification; protein ubiquitination. E3 ubiquitin-protein ligase that acts as a negative regulator of NOD2 signaling by mediating ubiquitination and degradation of RIPK2. Also catalyzes ubiquitination and proteasomal degradation of CANX within the endoplasmic reticulum. Could have a role in spermatogenesis. This is E3 ubiquitin-protein ligase ZNRF4 (ZNRF4) from Macaca fascicularis (Crab-eating macaque).